Consider the following 456-residue polypeptide: Na(+)-translocating NADH-quinone reductase subunit A (456 aa).

The protein belongs to the NqrA family. In terms of assembly, composed of six subunits; NqrA, NqrB, NqrC, NqrD, NqrE and NqrF.

The catalysed reaction is a ubiquinone + n Na(+)(in) + NADH + H(+) = a ubiquinol + n Na(+)(out) + NAD(+). Its function is as follows. NQR complex catalyzes the reduction of ubiquinone-1 to ubiquinol by two successive reactions, coupled with the transport of Na(+) ions from the cytoplasm to the periplasm. NqrA to NqrE are probably involved in the second step, the conversion of ubisemiquinone to ubiquinol. This is Na(+)-translocating NADH-quinone reductase subunit A from Rhodopirellula baltica (strain DSM 10527 / NCIMB 13988 / SH1).